The primary structure comprises 285 residues: Small ribosomal subunit protein uS3 (285 aa).

The KH type-2 domain occupies 39-107 (VREFLKKKLK…PVAVNIEEVR (69 aa)). A disordered region spans residues 211-285 (GDAPVMRGED…RAAPPAAKGE (75 aa)). The span at 217–241 (RGEDRPEDDRRRRNPRGDRPGDRRG) shows a compositional bias: basic and acidic residues. A compositionally biased stretch (gly residues) spans 242-255 (PGAGRGGPGAGRGP). Composition is skewed to low complexity over residues 256 to 267 (ADGASAAPSGDA) and 276 to 285 (RAAPPAAKGE).

It belongs to the universal ribosomal protein uS3 family. In terms of assembly, part of the 30S ribosomal subunit. Forms a tight complex with proteins S10 and S14.

Functionally, binds the lower part of the 30S subunit head. Binds mRNA in the 70S ribosome, positioning it for translation. In Leptothrix cholodnii (strain ATCC 51168 / LMG 8142 / SP-6) (Leptothrix discophora (strain SP-6)), this protein is Small ribosomal subunit protein uS3.